We begin with the raw amino-acid sequence, 209 residues long: MANKKRSASSSRWLQEHFSDKYVQQAQKKGLRSRAWFKLDEIQQSDKLFKPGMTVVDLGAAPGGWSQYVVTQIGGSGRIIACDILPMDPIVGVDFLQGDFRDELVLKALLERVGESKVQVVMSDMAPNMSGTPAVDIPRSMYLVELALGMCRDVLAPGGSFLVKVFQGDGFDEYLREIRSLFTKVKIRKPDASRARSREVYIVATGRKL.

The S-adenosyl-L-methionine site is built by G63, W65, D83, D99, and D124. The active-site Proton acceptor is the K164.

Belongs to the class I-like SAM-binding methyltransferase superfamily. RNA methyltransferase RlmE family.

It localises to the cytoplasm. It carries out the reaction uridine(2552) in 23S rRNA + S-adenosyl-L-methionine = 2'-O-methyluridine(2552) in 23S rRNA + S-adenosyl-L-homocysteine + H(+). In terms of biological role, specifically methylates the uridine in position 2552 of 23S rRNA at the 2'-O position of the ribose in the fully assembled 50S ribosomal subunit. This is Ribosomal RNA large subunit methyltransferase E from Serratia proteamaculans (strain 568).